Reading from the N-terminus, the 203-residue chain is Endo-type membrane-bound lytic murein transglycosylase A (203 aa).

The first 15 residues, 1–15, serve as a signal peptide directing secretion; that stretch reads MKLRWFAFLVVLLAG. Residue cysteine 16 is the site of N-palmitoyl cysteine attachment. Cysteine 16 is lipidated: S-diacylglycerol cysteine.

The protein belongs to the transglycosylase Slt family.

The protein resides in the cell outer membrane. The enzyme catalyses Endolytic cleavage of the (1-&gt;4)-beta-glycosidic linkage between N-acetylmuramic acid (MurNAc) and N-acetylglucosamine (GlcNAc) residues in peptidoglycan with concomitant formation of a 1,6-anhydrobond in the MurNAc residue.. Its function is as follows. Murein-degrading enzyme. May play a role in recycling of muropeptides during cell elongation and/or cell division. Preferentially cleaves at a distance of more than two disaccharide units from the ends of the glycan chain. The sequence is that of Endo-type membrane-bound lytic murein transglycosylase A from Citrobacter koseri (strain ATCC BAA-895 / CDC 4225-83 / SGSC4696).